A 115-amino-acid chain; its full sequence is 5-hydroxyisourate hydrolase (115 aa).

The disordered stretch occupies residues 1 to 23; it reads MSGLTTHILDQASGKPAAGVGVR. Positions 7, 45, and 112 each coordinate substrate.

This sequence belongs to the transthyretin family. 5-hydroxyisourate hydrolase subfamily. In terms of assembly, homotetramer.

The catalysed reaction is 5-hydroxyisourate + H2O = 5-hydroxy-2-oxo-4-ureido-2,5-dihydro-1H-imidazole-5-carboxylate + H(+). In terms of biological role, catalyzes the hydrolysis of 5-hydroxyisourate (HIU) to 2-oxo-4-hydroxy-4-carboxy-5-ureidoimidazoline (OHCU). The protein is 5-hydroxyisourate hydrolase of Caulobacter vibrioides (strain ATCC 19089 / CIP 103742 / CB 15) (Caulobacter crescentus).